We begin with the raw amino-acid sequence, 490 residues long: 2-succinylbenzoate--CoA ligase (490 aa).

This sequence belongs to the ATP-dependent AMP-binding enzyme family. MenE subfamily.

The catalysed reaction is 2-succinylbenzoate + ATP + CoA = 2-succinylbenzoyl-CoA + AMP + diphosphate. It functions in the pathway quinol/quinone metabolism; 1,4-dihydroxy-2-naphthoate biosynthesis; 1,4-dihydroxy-2-naphthoate from chorismate: step 5/7. It participates in quinol/quinone metabolism; menaquinone biosynthesis. Its function is as follows. Converts 2-succinylbenzoate (OSB) to 2-succinylbenzoyl-CoA (OSB-CoA). This chain is 2-succinylbenzoate--CoA ligase, found in Geobacillus kaustophilus (strain HTA426).